The sequence spans 116 residues: UPF0654 protein C869.09 (116 aa).

Positions 32–116 (LKEHGSESHY…LLEEVDDESK (85 aa)) are disordered. Residues 39–48 (SHYTTGTTRG) show a composition bias toward polar residues. A compositionally biased stretch (basic and acidic residues) spans 49–64 (QKADADDAGELREEGF).

The protein belongs to the UPF0654 (con-6) family.

Its subcellular location is the cytoplasm. It is found in the nucleus. This is UPF0654 protein C869.09 from Schizosaccharomyces pombe (strain 972 / ATCC 24843) (Fission yeast).